Consider the following 764-residue polypeptide: Calpain-like protease palB/RIM13 (764 aa).

The 274-residue stretch at 95–368 (GEFYPPLTVY…FKYFYINWNP (274 aa)) folds into the Calpain catalytic domain. Active-site residues include cysteine 165, histidine 318, and asparagine 336.

Belongs to the peptidase C2 family. PalB/RIM13 subfamily.

Required for the proteolytic cleavage of the transcription factor RIM101 in response to alkaline ambient pH. The sequence is that of Calpain-like protease palB/RIM13 from Debaryomyces hansenii (strain ATCC 36239 / CBS 767 / BCRC 21394 / JCM 1990 / NBRC 0083 / IGC 2968) (Yeast).